Consider the following 507-residue polypeptide: Chromosomal replication initiator protein DnaA (507 aa).

The tract at residues 1–72 (MNNYNKIWEI…KKITKLKFEE (72 aa)) is domain I, interacts with DnaA modulators. Residues 72–162 (EKIIIEFVSE…KISFNKYNYG (91 aa)) form a domain II region. The domain III, AAA+ region stretch occupies residues 163 to 384 (NTNPKYSFDN…GALLRLLNYA (222 aa)). The ATP site is built by G207, G209, K210, and T211. Residues 385-507 (QTFGYDIDIN…LELILKKINS (123 aa)) are domain IV, binds dsDNA.

Belongs to the DnaA family. In terms of assembly, oligomerizes as a right-handed, spiral filament on DNA at oriC.

Its subcellular location is the cytoplasm. In terms of biological role, plays an essential role in the initiation and regulation of chromosomal replication. ATP-DnaA binds to the origin of replication (oriC) to initiate formation of the DNA replication initiation complex once per cell cycle. Binds the DnaA box (a 9 base pair repeat at the origin) and separates the double-stranded (ds)DNA. Forms a right-handed helical filament on oriC DNA; dsDNA binds to the exterior of the filament while single-stranded (ss)DNA is stabiized in the filament's interior. The ATP-DnaA-oriC complex binds and stabilizes one strand of the AT-rich DNA unwinding element (DUE), permitting loading of DNA polymerase. After initiation quickly degrades to an ADP-DnaA complex that is not apt for DNA replication. Binds acidic phospholipids. The sequence is that of Chromosomal replication initiator protein DnaA from Onion yellows phytoplasma (strain OY-M).